A 240-amino-acid chain; its full sequence is Biosynthetic peptidoglycan transglycosylase (240 aa).

The helical transmembrane segment at 12–31 (ALMWFMVGSVLLVLLLRFVP) threads the bilayer.

Belongs to the glycosyltransferase 51 family.

It is found in the cell inner membrane. The enzyme catalyses [GlcNAc-(1-&gt;4)-Mur2Ac(oyl-L-Ala-gamma-D-Glu-L-Lys-D-Ala-D-Ala)](n)-di-trans,octa-cis-undecaprenyl diphosphate + beta-D-GlcNAc-(1-&gt;4)-Mur2Ac(oyl-L-Ala-gamma-D-Glu-L-Lys-D-Ala-D-Ala)-di-trans,octa-cis-undecaprenyl diphosphate = [GlcNAc-(1-&gt;4)-Mur2Ac(oyl-L-Ala-gamma-D-Glu-L-Lys-D-Ala-D-Ala)](n+1)-di-trans,octa-cis-undecaprenyl diphosphate + di-trans,octa-cis-undecaprenyl diphosphate + H(+). It participates in cell wall biogenesis; peptidoglycan biosynthesis. Its function is as follows. Peptidoglycan polymerase that catalyzes glycan chain elongation from lipid-linked precursors. This is Biosynthetic peptidoglycan transglycosylase from Pseudomonas fluorescens (strain ATCC BAA-477 / NRRL B-23932 / Pf-5).